Consider the following 398-residue polypeptide: ATP-dependent (S)-NAD(P)H-hydrate dehydratase 1 (398 aa).

One can recognise a YjeF C-terminal domain in the interval 80 to 391 (LLRKAFQMIP…GYIGEAFELV (312 aa)). (6S)-NADPHX contacts are provided by residues G187 and 240 to 246 (NHVEFQR). Residues 280–284 (KGSID) and 300–309 (GSPKRCGGQG) each bind ATP. (6S)-NADPHX is bound at residue D310.

This sequence belongs to the NnrD/CARKD family. It depends on Mg(2+) as a cofactor.

The protein resides in the cytoplasm. It catalyses the reaction (6S)-NADHX + ATP = ADP + phosphate + NADH + H(+). It carries out the reaction (6S)-NADPHX + ATP = ADP + phosphate + NADPH + H(+). Its function is as follows. Catalyzes the dehydration of the S-form of NAD(P)HX at the expense of ATP, which is converted to ADP. Together with NAD(P)HX epimerase, which catalyzes the epimerization of the S- and R-forms, the enzyme allows the repair of both epimers of NAD(P)HX, a damaged form of NAD(P)H that is a result of enzymatic or heat-dependent hydration. In Puccinia graminis f. sp. tritici (strain CRL 75-36-700-3 / race SCCL) (Black stem rust fungus), this protein is ATP-dependent (S)-NAD(P)H-hydrate dehydratase 1.